A 383-amino-acid polypeptide reads, in one-letter code: MLKHLLPLGTRDEFGRRARTKQHLIAVIQAHFKQRGLAPIATPLLENEAVFDPYQMGNYQLYRLFGNDGRTLVLRPDMTLPVARFISATNVPLPQKFGYVGDIFRVSRQLSGSYNQITQAGVELVGYASLKAEFECLTIANQLSSELIADAVEIELGDAQFAQRVVASLTGDEGEQQAILTALFDKQVPRYTKLIAKYRAQPLYDFLKAWPRLFGRPECIFKELAAAPLPETVQPSLKRLQTVVAWMQQTMPEQVISVDLSSQAPQKYYTGLTFRGYSQAGAGYLFSGGRYDKLLTNFQAEAEPAVGMGLNVDLLTTLATDQQTAYAEQLIYFEPEQWSQAEAYLAKQPHAILSLADDLAGARIEAQRLNAQLIDLTGGMTND.

Belongs to the class-II aminoacyl-tRNA synthetase family. HisZ subfamily. Heteromultimer composed of HisG and HisZ subunits.

Its subcellular location is the cytoplasm. It functions in the pathway amino-acid biosynthesis; L-histidine biosynthesis; L-histidine from 5-phospho-alpha-D-ribose 1-diphosphate: step 1/9. Required for the first step of histidine biosynthesis. May allow the feedback regulation of ATP phosphoribosyltransferase activity by histidine. In Lactiplantibacillus plantarum (strain ATCC BAA-793 / NCIMB 8826 / WCFS1) (Lactobacillus plantarum), this protein is ATP phosphoribosyltransferase regulatory subunit.